The following is a 261-amino-acid chain: tRNA pseudouridine synthase A (261 aa).

D51 functions as the Nucleophile in the catalytic mechanism. Y109 is a binding site for substrate.

Belongs to the tRNA pseudouridine synthase TruA family. In terms of assembly, homodimer.

The catalysed reaction is uridine(38/39/40) in tRNA = pseudouridine(38/39/40) in tRNA. Functionally, formation of pseudouridine at positions 38, 39 and 40 in the anticodon stem and loop of transfer RNAs. The chain is tRNA pseudouridine synthase A from Shewanella amazonensis (strain ATCC BAA-1098 / SB2B).